Reading from the N-terminus, the 804-residue chain is Leucine--tRNA ligase (804 aa).

The 'HIGH' region motif lies at 39–50; that stretch reads PYPSGKGLHVGH. The 'KMSKS' region signature appears at 573–577; the sequence is KMSKS. K576 contributes to the ATP binding site.

Belongs to the class-I aminoacyl-tRNA synthetase family.

It is found in the cytoplasm. It carries out the reaction tRNA(Leu) + L-leucine + ATP = L-leucyl-tRNA(Leu) + AMP + diphosphate. This is Leucine--tRNA ligase from Lactobacillus delbrueckii subsp. bulgaricus (strain ATCC BAA-365 / Lb-18).